The primary structure comprises 261 residues: 5'-nucleotidase SurE (261 aa).

A divalent metal cation-binding residues include Asp8, Asp9, Ser43, and Asn96.

This sequence belongs to the SurE nucleotidase family. It depends on a divalent metal cation as a cofactor.

The protein resides in the cytoplasm. It catalyses the reaction a ribonucleoside 5'-phosphate + H2O = a ribonucleoside + phosphate. Nucleotidase that shows phosphatase activity on nucleoside 5'-monophosphates. The sequence is that of 5'-nucleotidase SurE from Cereibacter sphaeroides (strain ATCC 17029 / ATH 2.4.9) (Rhodobacter sphaeroides).